A 235-amino-acid polypeptide reads, in one-letter code: MSFLKSFPPPGSAEGLRQQQPETEAVLNGKGLGTGTLYIAESRLSWLDGSGLGFSLEYPTISLHAVSRDLNAYPREHLYVMVNAKFGEESKESVAEEEDSDDDVEPIAEFRFVPSDKSALEAMFTAMCECQALHPDPEDEDSDDYDGEEYDVEAHEQGQGDIPTFYTYEEGLSHLTAEGQATLERLEGMLSQSVSSQYNMAGVRTEDSTRDYEDGMEVDTTPTVAGQFEDADVDH.

The tract at residues 1–21 is disordered; the sequence is MSFLKSFPPPGSAEGLRQQQP. The residue at position 2 (serine 2) is an N-acetylserine. Phosphoserine is present on residues serine 100, serine 142, serine 191, serine 193, serine 196, and serine 208. The tract at residues 133-157 is disordered; that stretch reads LHPDPEDEDSDDYDGEEYDVEAHEQ. The span at 137 to 151 shows a compositional bias: acidic residues; it reads PEDEDSDDYDGEEYD. The segment at 195–217 is disordered; it reads SSQYNMAGVRTEDSTRDYEDGME. Over residues 204–213 the composition is skewed to basic and acidic residues; it reads RTEDSTRDYE. Position 221 is a phosphothreonine (threonine 221).

This sequence belongs to the pICln (TC 1.A.47) family. In terms of assembly, component of the methylosome, a 20S complex containing at least PRMT5/SKB1, WDR77/MEP50 and CLNS1A/pICln. May mediate SNRPD1 and SNRPD3 methylation. Forms a 6S pICln-Sm complex composed of CLNS1A/pICln, SNRPD1, SNRPD2, SNRPE, SNRPF and SNRPG; ring-like structure where CLNS1A/pICln mimics additional Sm proteins and which is unable to assemble into the core snRNP. Interacts with LSM10 and LSM11.

It is found in the cytoplasm. It localises to the cytosol. Its subcellular location is the nucleus. The protein resides in the cytoskeleton. Functionally, involved in both the assembly of spliceosomal snRNPs and the methylation of Sm proteins. Chaperone that regulates the assembly of spliceosomal U1, U2, U4 and U5 small nuclear ribonucleoproteins (snRNPs), the building blocks of the spliceosome, and thereby plays an important role in the splicing of cellular pre-mRNAs. Most spliceosomal snRNPs contain a common set of Sm proteins SNRPB, SNRPD1, SNRPD2, SNRPD3, SNRPE, SNRPF and SNRPG that assemble in a heptameric protein ring on the Sm site of the small nuclear RNA to form the core snRNP (Sm core). In the cytosol, the Sm proteins SNRPD1, SNRPD2, SNRPE, SNRPF and SNRPG are trapped in an inactive 6S pICln-Sm complex by the chaperone CLNS1A that controls the assembly of the core snRNP. Dissociation by the SMN complex of CLNS1A from the trapped Sm proteins and their transfer to an SMN-Sm complex triggers the assembly of core snRNPs and their transport to the nucleus. This is Methylosome subunit pICln (CLNS1A) from Canis lupus familiaris (Dog).